We begin with the raw amino-acid sequence, 79 residues long: D-alanyl carrier protein (79 aa).

The region spanning 1-77 is the Carrier domain; it reads MDVKAEVIEI…KIVEGVTELR (77 aa). S35 carries the post-translational modification O-(pantetheine 4'-phosphoryl)serine.

Belongs to the DltC family. Post-translationally, 4'-phosphopantetheine is transferred from CoA to a specific serine of apo-DCP.

The protein localises to the cytoplasm. It participates in cell wall biogenesis; lipoteichoic acid biosynthesis. Carrier protein involved in the D-alanylation of lipoteichoic acid (LTA). The loading of thioester-linked D-alanine onto DltC is catalyzed by D-alanine--D-alanyl carrier protein ligase DltA. The DltC-carried D-alanyl group is further transferred to cell membrane phosphatidylglycerol (PG) by forming an ester bond, probably catalyzed by DltD. D-alanylation of LTA plays an important role in modulating the properties of the cell wall in Gram-positive bacteria, influencing the net charge of the cell wall. The polypeptide is D-alanyl carrier protein (Streptococcus thermophilus (strain CNRZ 1066)).